A 321-amino-acid chain; its full sequence is MIFLTLEHILTHISFSIVSIVITIYLMTLLVHETVGLYDSSEKGLIATFFCITGFLVIRWIYSGHFPLSDLYESLMFLSWSFSIIHMVPYFTNHKNLLSTITAPSAIFTQGFATSGLLTEMHRSTKLVPALQSQWLMMHVSMMILSYAALLCGSLLSIALLVITFRKNVENFGKSKSNPFLIGPFSFGEIKYVNEINNVLRNTFLISFRNFRRYQVIQQLDCWSCRVISLGFIFLTIGILSGAVWANEAWGSYWNWDPKETWAFITWTIFAIYLHTRTNKNLQGINSAIVASIGFLIIWICYFGVNLLGIGLHSYGSFTSN.

The next 8 membrane-spanning stretches (helical) occupy residues 9–29, 44–64, 71–91, 97–117, 143–163, 227–247, 261–275, and 288–308; these read ILTH…LMTL, GLIA…IYSG, LYES…VPYF, LLST…TSGL, MILS…LLVI, VISL…VWAN, TWAF…IYLH, and AIVA…VNLL.

The protein belongs to the CcmF/CycK/Ccl1/NrfE/CcsA family. As to quaternary structure, may interact with Ccs1.

It localises to the plastid. Its subcellular location is the chloroplast thylakoid membrane. Its function is as follows. Required during biogenesis of c-type cytochromes (cytochrome c6 and cytochrome f) at the step of heme attachment. The protein is Cytochrome c biogenesis protein CcsA of Nandina domestica (Heavenly bamboo).